The sequence spans 823 residues: Trimethylamine-N-oxide reductase (823 aa).

The tat-type signal signal peptide spans 1-32 (MKQSRRQFLKNMSAMAATFAMPNFLIAQNAFA). A Mo-bis(molybdopterin guanine dinucleotide)-binding site is contributed by Ser-181.

The protein belongs to the prokaryotic molybdopterin-containing oxidoreductase family. Requires Mo-bis(molybdopterin guanine dinucleotide) as cofactor. Predicted to be exported by the Tat system. The position of the signal peptide cleavage has not been experimentally proven.

The protein localises to the periplasm. The enzyme catalyses trimethylamine + 2 Fe(III)-[cytochrome c] + H2O = trimethylamine N-oxide + 2 Fe(II)-[cytochrome c] + 3 H(+). Reduces trimethylamine-N-oxide (TMAO) into trimethylamine; an anaerobic reaction coupled to energy-yielding reactions. The polypeptide is Trimethylamine-N-oxide reductase (torA) (Pasteurella multocida (strain Pm70)).